A 178-amino-acid chain; its full sequence is Caveolin-1 (178 aa).

S2 is modified (N-acetylserine). S2 carries the post-translational modification Phosphoserine. A required for homooligomerization region spans residues 2 to 94 (SGGKYVDSEG…WKASFTTFTV (93 aa)). At 2-104 (SGGKYVDSEG…TKYWFYRLLS (103 aa)) the chain is on the cytoplasmic side. K5 carries the N6-acetyllysine; alternate modification. K5 participates in a covalent cross-link: Glycyl lysine isopeptide (Lys-Gly) (interchain with G-Cter in ubiquitin); alternate. Y6 carries the phosphotyrosine modification. S9 bears the Phosphoserine mark. At Y14 the chain carries Phosphotyrosine; by ABL1. A Phosphotyrosine modification is found at Y25. Residues K26 and K30 each participate in a glycyl lysine isopeptide (Lys-Gly) (interchain with G-Cter in ubiquitin) cross-link. At S37 the chain carries Phosphoserine. Glycyl lysine isopeptide (Lys-Gly) (interchain with G-Cter in ubiquitin) cross-links involve residues K39, K47, and K57. Residues 82–94 (DGIWKASFTTFTV) form an interaction with CAVIN3 region. The helical intramembrane region spans 105–125 (ALFGIPMALIWGIYFAILSFL). Residues 126–178 (HIWAVVPCIKSFLIEIQCISRVYSIYVHTVCDPLFEAVGKIFSNVRINLQKEI) lie on the Cytoplasmic side of the membrane. Positions 131 to 142 (VPCIKSFLIEIQ) are interacts with SPRY1, SPRY2, SPRY3 and SPRY4. 3 S-palmitoyl cysteine lipidation sites follow: C133, C143, and C156. Residues 149–160 (SIYVHTVCDPLF) form an interacts with SPRY1, SPRY2, and SPRY4 region. The interval 167 to 178 (FSNVRINLQKEI) is interacts with SPRY1, SPRY2, SPRY3 and SPRY4.

This sequence belongs to the caveolin family. In terms of assembly, homooligomer. Interacts (via the N-terminus) with DPP4; the interaction is direct. Forms a stable heterooligomeric complex with CAV2 that targets to lipid rafts and drives caveolae formation. Interacts with PACSIN2; this interaction induces membrane tubulation. Interacts with BMX, BTK, CTNNB1, CDH1, GLIPR2, JUP, NOSTRIN, SNAP25 and STX1A. Interacts with SLC7A9. Interacts with TGFBR1. Interacts with CAVIN3 (via leucine-zipper domain) in a cholesterol-sensitive manner. Interacts with CAVIN1. Interacts with EHD2 in a cholesterol-dependent manner. Forms a ternary complex with UBXN6 and VCP; mediates CAV1 targeting to lysosomes for degradation. Interacts with ABCG1; this interaction regulates ABCG1-mediated cholesterol efflux. Interacts with NEU3; this interaction enhances NEU3 sialidase activity within caveola. Interacts (via C-terminus) with SPRY1, SPRY2 (via C-terminus), SPRY3, and SPRY4. Interacts with IGFBP5; this interaction allows trafficking of IGFBP5 from the plasma membrane to the nucleus. Phosphorylated at Tyr-14 by ABL1 in response to oxidative stress. Post-translationally, ubiquitinated. Undergo monoubiquitination and multi- and/or polyubiquitination. Monoubiquitination of N-terminal lysines promotes integration in a ternary complex with UBXN6 and VCP which promotes oligomeric CAV1 targeting to lysosomes for degradation. Ubiquitinated by ZNRF1; leading to degradation and modulation of the TLR4-mediated immune response.

The protein resides in the golgi apparatus membrane. Its subcellular location is the cell membrane. The protein localises to the membrane. It localises to the caveola. It is found in the membrane raft. May act as a scaffolding protein within caveolar membranes. Forms a stable heterooligomeric complex with CAV2 that targets to lipid rafts and drives caveolae formation. Mediates the recruitment of CAVIN proteins (CAVIN1/2/3/4) to the caveolae. Interacts directly with G-protein alpha subunits and can functionally regulate their activity. Involved in the costimulatory signal essential for T-cell receptor (TCR)-mediated T-cell activation. Its binding to DPP4 induces T-cell proliferation and NF-kappa-B activation in a T-cell receptor/CD3-dependent manner. Recruits CTNNB1 to caveolar membranes and may regulate CTNNB1-mediated signaling through the Wnt pathway. Negatively regulates TGFB1-mediated activation of SMAD2/3 by mediating the internalization of TGFBR1 from membrane rafts leading to its subsequent degradation. Binds 20(S)-hydroxycholesterol (20(S)-OHC). The sequence is that of Caveolin-1 (CAV1) from Chlorocebus aethiops (Green monkey).